A 1096-amino-acid polypeptide reads, in one-letter code: Lysine-specific demethylase PHF2 (1096 aa).

A PHD-type zinc finger spans residues 5-56; that stretch reads PVYCVCRLPYDVTRFMIECDACKDWFHGSCVGVEEEEAPDIDIYHCPNCEKT. Residues Thr-193 and Thr-246 each contribute to the 2-oxoglutarate site. One can recognise a JmjC domain in the interval 197-353; sequence FSDTRMSSFV…MQMRAYEVER (157 aa). His-249 and Asp-251 together coordinate Fe cation. Residues Tyr-259 and Lys-266 each contribute to the 2-oxoglutarate site. Tyr-321 contributes to the Fe cation binding site. Thr-323 is a binding site for 2-oxoglutarate. Residues 448–630 are disordered; sequence TVRPEVNAAA…KSPLAGNKDK (183 aa). Position 474 is a phosphoserine (Ser-474). Thr-479 is subject to Phosphothreonine. The segment covering 503 to 515 has biased composition (pro residues); that stretch reads SKIPKPPKSPKPP. Ser-536 bears the Phosphoserine mark. Composition is skewed to basic and acidic residues over residues 545-560 and 575-630; these read LEAH…EPPK and DTVH…NKDK. Phosphoserine is present on residues Ser-651, Ser-677, and Ser-701. Lys-707 participates in a covalent cross-link: Glycyl lysine isopeptide (Lys-Gly) (interchain with G-Cter in SUMO2). Lys-716 is subject to N6-acetyllysine. 3 disordered regions span residues 719–755, 811–841, and 871–1080; these read LDSA…ESGS, WGTG…KRLL, and YPSL…TAKQ. Residue Tyr-724 is modified to Phosphotyrosine. Basic and acidic residues predominate over residues 725-753; it reads KSDDSSDEGSLHIDTDTKPGRNAKVKKES. 4 positions are modified to phosphoserine: Ser-726, Ser-729, Ser-730, and Ser-734. Phosphoserine is present on residues Ser-873, Ser-876, and Ser-893. A compositionally biased stretch (basic and acidic residues) spans 910–919; the sequence is RQDRPVREGT. Basic residues predominate over residues 943 to 953; that stretch reads NRKKKNTKRKP. Positions 954–1010 are enriched in low complexity; sequence APNTASPSISTSASASTGTTSASTTPASTTPASTTPASTTPASTSTASSQASQEGSS. Polar residues-rich tracts occupy residues 1031–1040 and 1054–1065; these read GTFSGSQAGR and RRPSASSPNNTA. Ser-1057 is subject to Phosphoserine; by PKA.

Belongs to the JHDM1 histone demethylase family. JHDM1D subfamily. In terms of assembly, component of the PHF2-ARID5B complex, at least composed of PHF2 and ARID5B. Interacts with HNF4A and NR1H4. Interacts with RELA. Phosphorylated by PKA on specific serine residues, leading to the formation of an active lysine demethylase complex.

The protein localises to the nucleus. Its subcellular location is the nucleolus. The protein resides in the chromosome. It localises to the centromere. It is found in the kinetochore. It carries out the reaction N(6),N(6)-dimethyl-L-lysyl(9)-[histone H3] + 2-oxoglutarate + O2 = N(6)-methyl-L-lysyl(9)-[histone H3] + formaldehyde + succinate + CO2. Enzymatically inactive by itself, and become active following phosphorylation by PKA. Lysine demethylase that demethylates both histones and non-histone proteins. Enzymatically inactive by itself, and becomes active following phosphorylation by PKA: forms a complex with ARID5B and mediates demethylation of methylated ARID5B. Demethylation of ARID5B leads to target the PHF2-ARID5B complex to target promoters, where PHF2 mediates demethylation of dimethylated 'Lys-9' of histone H3 (H3K9me2), followed by transcription activation of target genes. The PHF2-ARID5B complex acts as a coactivator of HNF4A in liver. PHF2 is recruited to trimethylated 'Lys-4' of histone H3 (H3K4me3) at rDNA promoters and promotes expression of rDNA. Involved in the activation of toll-like receptor 4 (TLR4)-target inflammatory genes in macrophages by catalyzing the demethylation of trimethylated histone H4 lysine 20 (H4K20me3) at the gene promoters. This Mus musculus (Mouse) protein is Lysine-specific demethylase PHF2 (Phf2).